Consider the following 360-residue polypeptide: tRNA (guanine-N(7)-)-methyltransferase (360 aa).

Residues 1-32 form a disordered region; it reads MTPPPPKRQKRDEYRKATAEAASQPGPSDVAE. S-adenosyl-L-methionine-binding positions include glycine 99 and 122–123; that span reads EI. Residues 177–196 are disordered; the sequence is ADAASPVLSTDTEHTPTTLV. The segment covering 183–196 has biased composition (polar residues); that stretch reads VLSTDTEHTPTTLV. S-adenosyl-L-methionine contacts are provided by residues 209 to 210 and cysteine 229; that span reads NT. Residue aspartate 232 is part of the active site. 332–334 is a binding site for S-adenosyl-L-methionine; sequence TEE.

It belongs to the class I-like SAM-binding methyltransferase superfamily. TrmB family. As to quaternary structure, forms a complex with trm82.

The protein resides in the nucleus. It carries out the reaction guanosine(46) in tRNA + S-adenosyl-L-methionine = N(7)-methylguanosine(46) in tRNA + S-adenosyl-L-homocysteine. Its pathway is tRNA modification; N(7)-methylguanine-tRNA biosynthesis. Its function is as follows. Catalyzes the formation of N(7)-methylguanine at position 46 (m7G46) in tRNA. This chain is tRNA (guanine-N(7)-)-methyltransferase (trm8), found in Neosartorya fischeri (strain ATCC 1020 / DSM 3700 / CBS 544.65 / FGSC A1164 / JCM 1740 / NRRL 181 / WB 181) (Aspergillus fischerianus).